The primary structure comprises 101 residues: Integration host factor subunit alpha (101 aa).

This sequence belongs to the bacterial histone-like protein family. As to quaternary structure, heterodimer of an alpha and a beta chain.

Its function is as follows. This protein is one of the two subunits of integration host factor, a specific DNA-binding protein that functions in genetic recombination as well as in transcriptional and translational control. The chain is Integration host factor subunit alpha from Dinoroseobacter shibae (strain DSM 16493 / NCIMB 14021 / DFL 12).